The primary structure comprises 383 residues: UDP-N-acetylglucosamine--N-acetylmuramyl-(pentapeptide) pyrophosphoryl-undecaprenol N-acetylglucosamine transferase (383 aa).

UDP-N-acetyl-alpha-D-glucosamine is bound by residues 10–12 (TGG), Asn124, Arg165, Ser190, Ile245, and Gln290. A disordered region spans residues 364–383 (PFGQAREPGQKPARPPDLAS).

The protein belongs to the glycosyltransferase 28 family. MurG subfamily.

The protein localises to the cell inner membrane. The enzyme catalyses di-trans,octa-cis-undecaprenyl diphospho-N-acetyl-alpha-D-muramoyl-L-alanyl-D-glutamyl-meso-2,6-diaminopimeloyl-D-alanyl-D-alanine + UDP-N-acetyl-alpha-D-glucosamine = di-trans,octa-cis-undecaprenyl diphospho-[N-acetyl-alpha-D-glucosaminyl-(1-&gt;4)]-N-acetyl-alpha-D-muramoyl-L-alanyl-D-glutamyl-meso-2,6-diaminopimeloyl-D-alanyl-D-alanine + UDP + H(+). Its pathway is cell wall biogenesis; peptidoglycan biosynthesis. Cell wall formation. Catalyzes the transfer of a GlcNAc subunit on undecaprenyl-pyrophosphoryl-MurNAc-pentapeptide (lipid intermediate I) to form undecaprenyl-pyrophosphoryl-MurNAc-(pentapeptide)GlcNAc (lipid intermediate II). The polypeptide is UDP-N-acetylglucosamine--N-acetylmuramyl-(pentapeptide) pyrophosphoryl-undecaprenol N-acetylglucosamine transferase (Anaeromyxobacter sp. (strain K)).